A 58-amino-acid polypeptide reads, in one-letter code: Metallothionein (58 aa).

The interval 1-29 is beta; it reads MPDPCCIDKCECKEGGCKAGCKCTSCRCT. A divalent metal cation-binding residues include Cys-5, Cys-6, Cys-10, Cys-12, Cys-17, Cys-21, Cys-23, Cys-26, Cys-28, Cys-31, Cys-34, Cys-38, Cys-40, Cys-46, Cys-50, Cys-54, Cys-56, and Cys-57. Positions 30–58 are alpha; sequence PCEKCSSGCKCTTKEDCCKTCTKPCSCCP.

Belongs to the metallothionein superfamily. Type 3 family.

Metallothioneins have a high content of cysteine residues that bind various heavy metals. Class I MTS in marine crustacea are involved in the sequestration of elevated levels of heavy-metal ions. This is Metallothionein from Carcinus maenas (Common shore crab).